A 304-amino-acid chain; its full sequence is Heme A synthase (304 aa).

Residues 1-8 (MFNKRNLK) lie on the Cytoplasmic side of the membrane. Residues 9-29 (WLSVLATIIMAFVQLGGALVT) form a helical membrane-spanning segment. Topologically, residues 30–67 (KTGSEDGCGSSWPLCHGALLPQNLPIDTIIELSHRAVS) are extracellular. Cys-37 and Cys-44 form a disulfide bridge. The active site involves Glu-60. Position 63 (His-63) interacts with heme o. Residues 68–88 (GLSLIVVLWLAITAWKHIGYI) traverse the membrane as a helical segment. Topologically, residues 89 to 93 (REVKP) are cytoplasmic. Residues 94-114 (LAIISIAFLLVQALIGAAAVI) traverse the membrane as a helical segment. Residues 115-123 (WQQNSYVLA) lie on the Extracellular side of the membrane. The chain crosses the membrane as a helical span at residues 124–144 (LHFGISLISFSSVFVLMLIIF). His-125 serves as a coordination point for heme o. The Cytoplasmic segment spans residues 145-163 (EVDKKYEADELYIRKPLRR). Residues 164–184 (LTWIMTGIVYLTIYTGALVRH) traverse the membrane as a helical segment. The Extracellular portion of the chain corresponds to 185-215 (AKASLAYGGWPLPFHDIIPHTEQDWVQFAHR). His-214 contributes to the heme b binding site. Residues 216-236 (GMAFITFFWIMITFIHAVKNY) traverse the membrane as a helical segment. Residues 237 to 244 (SENRTIRY) lie on the Cytoplasmic side of the membrane. The chain crosses the membrane as a helical span at residues 245-265 (GYTTAFILIILQVITGALSVM). The Extracellular segment spans residues 266–270 (TNVNL). The chain crosses the membrane as a helical span at residues 271–291 (FIALLHALFITILFGMIAYFI). Residue His-276 participates in heme b binding. Residues 292-304 (MLMLRTIRSEKIK) are Cytoplasmic-facing.

The protein belongs to the COX15/CtaA family. Type 1 subfamily. As to quaternary structure, interacts with CtaB. Requires heme b as cofactor.

Its subcellular location is the cell membrane. The catalysed reaction is Fe(II)-heme o + 2 A + H2O = Fe(II)-heme a + 2 AH2. The protein operates within porphyrin-containing compound metabolism; heme A biosynthesis; heme A from heme O: step 1/1. Functionally, catalyzes the conversion of heme O to heme A by two successive hydroxylations of the methyl group at C8. The first hydroxylation forms heme I, the second hydroxylation results in an unstable dihydroxymethyl group, which spontaneously dehydrates, resulting in the formyl group of heme A. The polypeptide is Heme A synthase (Staphylococcus haemolyticus (strain JCSC1435)).